The chain runs to 775 residues: Lon protease (775 aa).

Positions 6 to 207 (LPLMALRDIV…TIINILTSNI (202 aa)) constitute a Lon N-terminal domain. 356–363 (GPPGVGKT) is a binding site for ATP. The region spanning 592 to 773 (NDQIGSTTGL…DQVLEHALTK (182 aa)) is the Lon proteolytic domain. Residues serine 679 and lysine 722 contribute to the active site.

This sequence belongs to the peptidase S16 family. As to quaternary structure, homohexamer. Organized in a ring with a central cavity.

The protein resides in the cytoplasm. The catalysed reaction is Hydrolysis of proteins in presence of ATP.. ATP-dependent serine protease that mediates the selective degradation of mutant and abnormal proteins as well as certain short-lived regulatory proteins. Required for cellular homeostasis and for survival from DNA damage and developmental changes induced by stress. Degrades polypeptides processively to yield small peptide fragments that are 5 to 10 amino acids long. Binds to DNA in a double-stranded, site-specific manner. The protein is Lon protease of Rickettsia bellii (strain RML369-C).